Consider the following 183-residue polypeptide: Ribosome-recycling factor (183 aa).

This sequence belongs to the RRF family.

It is found in the cytoplasm. Functionally, responsible for the release of ribosomes from messenger RNA at the termination of protein biosynthesis. May increase the efficiency of translation by recycling ribosomes from one round of translation to another. This is Ribosome-recycling factor from Mycoplasma genitalium (strain ATCC 33530 / DSM 19775 / NCTC 10195 / G37) (Mycoplasmoides genitalium).